Reading from the N-terminus, the 238-residue chain is Protein FEV (238 aa).

A DNA-binding region (ETS) is located at residues 47 to 127 (IQLWQFLLEL…HGKRYAYRFD (81 aa)). Residues 129–238 (QGLAQACQPP…AASHLGGHYH (110 aa)) form a may mediate active transcriptional repression region.

It belongs to the ETS family. In terms of tissue distribution, in brain, exclusively expressed in the major serotonergic neurons of the dorsal and median raphe nuclei located in the midbrain and pons. Also detected in prostate and small intestine.

It is found in the nucleus. In terms of biological role, functions as a transcriptional regulator. According to PubMed:12761502, it functions as a transcriptional repressor. Functions in the differentiation and the maintenance of the central serotonergic neurons. May play a role in cell growth. This is Protein FEV (FEV) from Homo sapiens (Human).